A 201-amino-acid polypeptide reads, in one-letter code: Small ribosomal subunit protein uS4 (201 aa).

The interval 1-46 (MARYTGPRSRISRRFGEPVMGDSKALQKKNYAPGMHGRNKKRKQSE) is disordered. An S4 RNA-binding domain is found at 92–151 (ARLDNTVYRLGIASSRRAARQLVIHKHIVVNGDVVNIPSYQLKPGDQLGVREKSKSIEAI).

The protein belongs to the universal ribosomal protein uS4 family. In terms of assembly, part of the 30S ribosomal subunit. Contacts protein S5. The interaction surface between S4 and S5 is involved in control of translational fidelity.

Functionally, one of the primary rRNA binding proteins, it binds directly to 16S rRNA where it nucleates assembly of the body of the 30S subunit. With S5 and S12 plays an important role in translational accuracy. The polypeptide is Small ribosomal subunit protein uS4 (Cytophaga hutchinsonii (strain ATCC 33406 / DSM 1761 / CIP 103989 / NBRC 15051 / NCIMB 9469 / D465)).